The following is a 191-amino-acid chain: Threonylcarbamoyl-AMP synthase (191 aa).

Residues 10–191 (PFRVRHAAAE…DGRSGAYLRR (182 aa)) form the YrdC-like domain.

This sequence belongs to the SUA5 family. TsaC subfamily.

It localises to the cytoplasm. It carries out the reaction L-threonine + hydrogencarbonate + ATP = L-threonylcarbamoyladenylate + diphosphate + H2O. Required for the formation of a threonylcarbamoyl group on adenosine at position 37 (t(6)A37) in tRNAs that read codons beginning with adenine. Catalyzes the conversion of L-threonine, HCO(3)(-)/CO(2) and ATP to give threonylcarbamoyl-AMP (TC-AMP) as the acyladenylate intermediate, with the release of diphosphate. This chain is Threonylcarbamoyl-AMP synthase, found in Halorhodospira halophila (strain DSM 244 / SL1) (Ectothiorhodospira halophila (strain DSM 244 / SL1)).